Consider the following 68-residue polypeptide: Large ribosomal subunit protein uL29 (68 aa).

It belongs to the universal ribosomal protein uL29 family.

The sequence is that of Large ribosomal subunit protein uL29 from Persephonella marina (strain DSM 14350 / EX-H1).